The sequence spans 277 residues: Phosphoenolpyruvate synthase regulatory protein (277 aa).

Glycine 157 to threonine 164 provides a ligand contact to ADP.

The protein belongs to the pyruvate, phosphate/water dikinase regulatory protein family. PSRP subfamily.

The catalysed reaction is [pyruvate, water dikinase] + ADP = [pyruvate, water dikinase]-phosphate + AMP + H(+). The enzyme catalyses [pyruvate, water dikinase]-phosphate + phosphate + H(+) = [pyruvate, water dikinase] + diphosphate. In terms of biological role, bifunctional serine/threonine kinase and phosphorylase involved in the regulation of the phosphoenolpyruvate synthase (PEPS) by catalyzing its phosphorylation/dephosphorylation. This chain is Phosphoenolpyruvate synthase regulatory protein, found in Escherichia coli O6:K15:H31 (strain 536 / UPEC).